Consider the following 275-residue polypeptide: Voltage-dependent calcium channel gamma-5 subunit (275 aa).

Transmembrane regions (helical) follow at residues 8–28 (ALTL…GIAV), 103–123 (FPLV…IGHI), 129–149 (ILAF…VVGL), and 181–201 (FAAI…YLFM).

This sequence belongs to the PMP-22/EMP/MP20 family. CACNG subfamily. As to quaternary structure, the L-type calcium channel is composed of five subunits: alpha-1, alpha-2/delta, beta and gamma. Acts as an auxiliary subunit for AMPA-selective glutamate receptors (AMPARs). Found in a complex with GRIA1, GRIA2, GRIA3, GRIA4, CNIH2, CNIH3, CACNG2, CACNG3, CACNG4, CACNG7 and CACNG8. Interacts with GRIA1, GRIA2, GRIA3 and GRIA4.

Its subcellular location is the membrane. It localises to the postsynaptic density membrane. Its function is as follows. Regulates the gating properties of AMPA-selective glutamate receptors (AMPARs). Modulates their gating properties by accelerating their rates of activation, deactivation and desensitization. Displays subunit-specific AMPA receptor regulation. Shows specificity for GRIA1, GRIA4 and the long isoform of GRIA2. According to PubMed:18817736, shows only specificity for GRIA2 and specifically to the form of GRIA2 for which a single amino acid in the pore region has been edited from a glutamine to an arginine residue. Thought to stabilize the calcium channel in an inactivated (closed) state. This chain is Voltage-dependent calcium channel gamma-5 subunit (Cacng5), found in Rattus norvegicus (Rat).